We begin with the raw amino-acid sequence, 242 residues long: Lactate utilization protein A 2 (242 aa).

This sequence belongs to the LutA/YkgE family.

Functionally, is involved in L-lactate degradation and allows cells to grow with lactate as the sole carbon source. The polypeptide is Lactate utilization protein A 2 (Bacillus cereus (strain ZK / E33L)).